The chain runs to 487 residues: Serine/threonine-protein kinase 4 (487 aa).

Methionine 1 is subject to N-acetylmethionine. Residue threonine 3 is modified to Phosphothreonine. The 252-residue stretch at 30-281 folds into the Protein kinase domain; sequence FDVLEKLGEG…ATQLLQHPFV (252 aa). Residues 36–44 and lysine 59 each bind ATP; that span reads LGEGSYGSV. Aspartate 149 (proton acceptor) is an active-site residue. A Phosphothreonine; by autocatalysis modification is found at threonine 183. A phosphoserine mark is found at serine 265 and serine 320. Residues 289–327 are a coiled coil; it reads ILRDLINEAMDVKLKRQEAQQREVDQEEEENSEEDELDS. Residues 305–332 form a disordered region; sequence QEAQQREVDQEEEENSEEDELDSGTMVR. Residues 313–326 are compositionally biased toward acidic residues; that stretch reads DQEEEENSEEDELD. 2 positions are modified to phosphothreonine: threonine 340 and threonine 367. A Phosphothreonine; by PKB/AKT1 modification is found at threonine 387. Residues serine 410 and serine 414 each carry the phosphoserine modification. Phosphotyrosine is present on tyrosine 433. The SARAH domain occupies 433–480; the sequence is YEFLKSWTVEDLQKRLLALDPMMEQEIEEIRQKYQSKRQPILDAIEAK.

This sequence belongs to the protein kinase superfamily. STE Ser/Thr protein kinase family. STE20 subfamily. As to quaternary structure, homodimer; mediated via the coiled-coil region. Interacts with NORE1, which inhibits autoactivation. Interacts with and stabilizes SAV1. Interacts with RASSF1. Interacts with FOXO3. Interacts with RASSF2 (via SARAH domain). Interacts with AR, PKB/AKT1, TNNI3 and SIRT1. Interacts with DLG5 (via PDZ domain 3). Interacts with MARK3 and SCRIB in the presence of DLG5. Requires Mg(2+) as cofactor. In terms of processing, autophosphorylated on serine and threonine residues. Phosphorylation at Thr-387 by PKB/AKT1, leads to inhibition of its: kinase activity, nuclear translocation and autophosphorylation at Thr-183. It also diminishes its cleavage by caspases and its ability to phosphorylate FOXO3. Proteolytically cleaved by caspase-3 during apoptosis at Asp-326 and Asp-349 resulting in a 37 kDa or a 39 kDa subunit respectively. The 39 kDa subunit is further cleaved into the 37 kDa form. Proteolytic cleavage results in kinase activation and nuclear translocation of the truncated form (MST1/N). It is less likely that cleavage at Asp-349 is a prerequisite for activation as this site is not conserved in the murine ortholog.

It localises to the cytoplasm. Its subcellular location is the nucleus. The catalysed reaction is L-seryl-[protein] + ATP = O-phospho-L-seryl-[protein] + ADP + H(+). It carries out the reaction L-threonyl-[protein] + ATP = O-phospho-L-threonyl-[protein] + ADP + H(+). Inhibited by the C-terminal non-catalytic region. Activated by caspase-cleavage. Full activation also requires homodimerization and autophosphorylation of Thr-183. Activated by RASSF1 which acts by preventing its dephosphorylation. Functionally, stress-activated, pro-apoptotic kinase which, following caspase-cleavage, enters the nucleus and induces chromatin condensation followed by internucleosomal DNA fragmentation. Key component of the Hippo signaling pathway which plays a pivotal role in organ size control and tumor suppression by restricting proliferation and promoting apoptosis. The core of this pathway is composed of a kinase cascade wherein STK3/MST2 and STK4/MST1, in complex with its regulatory protein SAV1, phosphorylates and activates LATS1/2 in complex with its regulatory protein MOB1, which in turn phosphorylates and inactivates YAP1 oncoprotein and WWTR1/TAZ. Phosphorylation of YAP1 by LATS2 inhibits its translocation into the nucleus to regulate cellular genes important for cell proliferation, cell death, and cell migration. STK3/MST2 and STK4/MST1 are required to repress proliferation of mature hepatocytes, to prevent activation of facultative adult liver stem cells (oval cells), and to inhibit tumor formation. Phosphorylates 'Ser-14' of histone H2B (H2BS14ph) during apoptosis. Phosphorylates FOXO3 upon oxidative stress, which results in its nuclear translocation and cell death initiation. Phosphorylates MOBKL1A, MOBKL1B and RASSF2. Phosphorylates TNNI3 (cardiac Tn-I) and alters its binding affinity to TNNC1 (cardiac Tn-C) and TNNT2 (cardiac Tn-T). Phosphorylates FOXO1 on 'Ser-212' and regulates its activation and stimulates transcription of PMAIP1 in a FOXO1-dependent manner. Phosphorylates SIRT1 and inhibits SIRT1-mediated p53/TP53 deacetylation, thereby promoting p53/TP53 dependent transcription and apoptosis upon DNA damage. Acts as an inhibitor of PKB/AKT1. Phosphorylates AR on 'Ser-650' and suppresses its activity by intersecting with PKB/AKT1 signaling and antagonizing formation of AR-chromatin complexes. In Bos taurus (Bovine), this protein is Serine/threonine-protein kinase 4 (STK4).